We begin with the raw amino-acid sequence, 279 residues long: Tryptophan synthase alpha chain (279 aa).

Active-site proton acceptor residues include Glu-50 and Asp-61.

Belongs to the TrpA family. As to quaternary structure, tetramer of two alpha and two beta chains.

The enzyme catalyses (1S,2R)-1-C-(indol-3-yl)glycerol 3-phosphate + L-serine = D-glyceraldehyde 3-phosphate + L-tryptophan + H2O. It participates in amino-acid biosynthesis; L-tryptophan biosynthesis; L-tryptophan from chorismate: step 5/5. Its function is as follows. The alpha subunit is responsible for the aldol cleavage of indoleglycerol phosphate to indole and glyceraldehyde 3-phosphate. The chain is Tryptophan synthase alpha chain from Brucella melitensis biotype 1 (strain ATCC 23456 / CCUG 17765 / NCTC 10094 / 16M).